Reading from the N-terminus, the 499-residue chain is Inosine-5'-monophosphate dehydrogenase (499 aa).

CBS domains are found at residues 106–165 (IDRE…SDAV) and 169–225 (MTDE…GSAA). Residues aspartate 260 and 308-310 (GIG) contribute to the NAD(+) site. Positions 310 and 312 each coordinate K(+). An IMP-binding site is contributed by serine 313. Cysteine 315 contributes to the K(+) binding site. Residue cysteine 315 is the Thioimidate intermediate of the active site. Residues 348 to 350 (DGG), 371 to 372 (GS), and 395 to 399 (YRGMG) each bind IMP. The active-site Proton acceptor is the arginine 411. Position 425 (glutamate 425) interacts with IMP. K(+) is bound by residues glutamate 479, glycine 480, and histidine 481. The disordered stretch occupies residues 480 to 499 (GHPHDVMITDEAPNYSPQGE).

It belongs to the IMPDH/GMPR family. As to quaternary structure, homotetramer. It depends on K(+) as a cofactor.

The enzyme catalyses IMP + NAD(+) + H2O = XMP + NADH + H(+). It participates in purine metabolism; XMP biosynthesis via de novo pathway; XMP from IMP: step 1/1. Its activity is regulated as follows. Mycophenolic acid (MPA) is a non-competitive inhibitor that prevents formation of the closed enzyme conformation by binding to the same site as the amobile flap. In contrast, mizoribine monophosphate (MZP) is a competitive inhibitor that induces the closed conformation. MPA is a potent inhibitor of mammalian IMPDHs but a poor inhibitor of the bacterial enzymes. MZP is a more potent inhibitor of bacterial IMPDH. Catalyzes the conversion of inosine 5'-phosphate (IMP) to xanthosine 5'-phosphate (XMP), the first committed and rate-limiting step in the de novo synthesis of guanine nucleotides, and therefore plays an important role in the regulation of cell growth. The protein is Inosine-5'-monophosphate dehydrogenase of Halobacterium salinarum (strain ATCC 700922 / JCM 11081 / NRC-1) (Halobacterium halobium).